Reading from the N-terminus, the 315-residue chain is Phosphomutase-like protein 3 (315 aa).

Residues 1-19 form the signal peptide; it reads MQQFLTLGALWTLFNVATT. The Tele-phosphohistidine intermediate role is filled by H77. N88 and N154 each carry an N-linked (GlcNAc...) asparagine glycan. E173 acts as the Proton donor/acceptor in catalysis. N-linked (GlcNAc...) asparagine glycosylation occurs at N185. The GPI-anchor amidated asparagine moiety is linked to residue N286. A propeptide spans 287–315 (removed in mature form); that stretch reads DAWDTFKDWCPNPPASISGTATSTATGSA.

It belongs to the phosphoglycerate mutase family.

The protein localises to the cell membrane. In Candida albicans (strain SC5314 / ATCC MYA-2876) (Yeast), this protein is Phosphomutase-like protein 3 (PGA12).